The following is a 144-amino-acid chain: Large ribosomal subunit protein uL11 (144 aa).

This sequence belongs to the universal ribosomal protein uL11 family. In terms of assembly, part of the ribosomal stalk of the 50S ribosomal subunit. Interacts with L10 and the large rRNA to form the base of the stalk. L10 forms an elongated spine to which L12 dimers bind in a sequential fashion forming a multimeric L10(L12)X complex. Post-translationally, one or more lysine residues are methylated.

Functionally, forms part of the ribosomal stalk which helps the ribosome interact with GTP-bound translation factors. In Parafrankia sp. (strain EAN1pec), this protein is Large ribosomal subunit protein uL11.